Consider the following 619-residue polypeptide: 1-deoxy-D-xylulose-5-phosphate synthase (619 aa).

Thiamine diphosphate contacts are provided by residues H74 and 115–117 (GHS). D146 contributes to the Mg(2+) binding site. Thiamine diphosphate is bound by residues 147–148 (GA), N175, Y285, and E365. N175 contacts Mg(2+).

Belongs to the transketolase family. DXPS subfamily. In terms of assembly, homodimer. The cofactor is Mg(2+). Thiamine diphosphate serves as cofactor.

The enzyme catalyses D-glyceraldehyde 3-phosphate + pyruvate + H(+) = 1-deoxy-D-xylulose 5-phosphate + CO2. It participates in metabolic intermediate biosynthesis; 1-deoxy-D-xylulose 5-phosphate biosynthesis; 1-deoxy-D-xylulose 5-phosphate from D-glyceraldehyde 3-phosphate and pyruvate: step 1/1. In terms of biological role, catalyzes the acyloin condensation reaction between C atoms 2 and 3 of pyruvate and glyceraldehyde 3-phosphate to yield 1-deoxy-D-xylulose-5-phosphate (DXP). This Clostridium perfringens (strain 13 / Type A) protein is 1-deoxy-D-xylulose-5-phosphate synthase.